A 211-amino-acid polypeptide reads, in one-letter code: Probable superoxide dismutase [Mn], mitochondrial (211 aa).

The Mn(2+) site is built by His36, His84, Asp173, and His177.

This sequence belongs to the iron/manganese superoxide dismutase family. In terms of assembly, homotetramer. It depends on Mn(2+) as a cofactor.

The protein localises to the mitochondrion matrix. It carries out the reaction 2 superoxide + 2 H(+) = H2O2 + O2. Destroys superoxide anion radicals which are normally produced within the cells and which are toxic to biological systems. The polypeptide is Probable superoxide dismutase [Mn], mitochondrial (Debaryomyces hansenii (strain ATCC 36239 / CBS 767 / BCRC 21394 / JCM 1990 / NBRC 0083 / IGC 2968) (Yeast)).